Here is a 463-residue protein sequence, read N- to C-terminus: L-seryl-tRNA(Sec) selenium transferase (463 aa).

At Lys295 the chain carries N6-(pyridoxal phosphate)lysine.

Belongs to the SelA family. In terms of assembly, homodecamer; pentamer of dimers. Binds only one seryl-tRNA(Sec) per dimer. The cofactor is pyridoxal 5'-phosphate.

It is found in the cytoplasm. It catalyses the reaction L-seryl-tRNA(Sec) + selenophosphate + H(+) = L-selenocysteinyl-tRNA(Sec) + phosphate. Its pathway is aminoacyl-tRNA biosynthesis; selenocysteinyl-tRNA(Sec) biosynthesis; selenocysteinyl-tRNA(Sec) from L-seryl-tRNA(Sec) (bacterial route): step 1/1. Converts seryl-tRNA(Sec) to selenocysteinyl-tRNA(Sec) required for selenoprotein biosynthesis. This Salmonella dublin (strain CT_02021853) protein is L-seryl-tRNA(Sec) selenium transferase.